The following is a 370-amino-acid chain: Aminomethyltransferase (370 aa).

It belongs to the GcvT family. As to quaternary structure, the glycine cleavage system is composed of four proteins: P, T, L and H.

The catalysed reaction is N(6)-[(R)-S(8)-aminomethyldihydrolipoyl]-L-lysyl-[protein] + (6S)-5,6,7,8-tetrahydrofolate = N(6)-[(R)-dihydrolipoyl]-L-lysyl-[protein] + (6R)-5,10-methylene-5,6,7,8-tetrahydrofolate + NH4(+). The glycine cleavage system catalyzes the degradation of glycine. In Clostridium botulinum (strain ATCC 19397 / Type A), this protein is Aminomethyltransferase.